The following is a 69-amino-acid chain: MARPNASELRQLSDADITEQINGLRRELFDLRFQQATRQLGNTHRFKQSRIKLAQLLTVQKERQSSTAS.

This sequence belongs to the universal ribosomal protein uL29 family.

The chain is Large ribosomal subunit protein uL29 from Synechococcus sp. (strain WH7803).